A 246-amino-acid polypeptide reads, in one-letter code: E3 ubiquitin ligase TRIM40 (246 aa).

The segment at C12–R55 adopts an RING-type zinc-finger fold. The B box-type zinc finger occupies G64–I105. Residues C69, H72, C91, and H97 each contribute to the Zn(2+) site. The stretch at I105–L170 forms a coiled coil.

It belongs to the TRIM/RBCC family. Interacts with NEDD8.

The enzyme catalyses S-ubiquitinyl-[E2 ubiquitin-conjugating enzyme]-L-cysteine + [acceptor protein]-L-lysine = [E2 ubiquitin-conjugating enzyme]-L-cysteine + N(6)-ubiquitinyl-[acceptor protein]-L-lysine.. In terms of biological role, E3 ubiquitin-protein ligase that plays a role in the limitation of the innate immune response. Mediates inhibition of the RLR signaling pathway by ubiquitinating RIGI and IFIH1 receptors, leading to their proteasomal degradation. Also promotes the neddylation of IKBKG/NEMO, stabilizing NFKBIA, and thereby inhibiting of NF-kappa-B nuclear translocation and activation. This is E3 ubiquitin ligase TRIM40 (Trim40) from Mus musculus (Mouse).